Consider the following 165-residue polypeptide: Chorismate pyruvate-lyase (165 aa).

4 residues coordinate substrate: Met35, Arg77, Leu115, and Glu156.

It belongs to the UbiC family. Monomer.

The protein resides in the cytoplasm. It carries out the reaction chorismate = 4-hydroxybenzoate + pyruvate. It functions in the pathway cofactor biosynthesis; ubiquinone biosynthesis. Functionally, removes the pyruvyl group from chorismate, with concomitant aromatization of the ring, to provide 4-hydroxybenzoate (4HB) for the ubiquinone pathway. This chain is Chorismate pyruvate-lyase, found in Enterobacter sp. (strain 638).